The following is a 974-amino-acid chain: Leucine-rich repeat receptor-like kinase protein SUNN (974 aa).

The signal sequence occupies residues 1-20 (MKNITCYLLLLCMLFTTCYS). 4 N-linked (GlcNAc...) asparagine glycosylation sites follow: N75, N104, N123, and N136. LRR repeat units follow at residues 92–116 (LNML…LSKL), 117–141 (TSLR…TFGM), 143–165 (KLEA…IVSL), 166–188 (MKLK…SYSE), 189–213 (FQKL…LSKL), 238–262 (IKSL…LGNL), 263–286 (ENLD…LSSM), 288–309 (SLMS…TFSK), 310–334 (LKNL…IGDL), 335–358 (PNLE…LGSN), 360–382 (KFIY…LCKS), 383–406 (KKLK…IGPC), 407–430 (KSLE…IFQL), 431–454 (PSVQ…ISGN), 456–477 (LGNL…MKNL), 478–501 (RSLQ…VFAL), 503–525 (VLTR…VTQC), 527–549 (SLTA…MKNL), 550–573 (KVLS…IRFM), and 574–598 (TSLT…QFLV). N250 and N274 each carry an N-linked (GlcNAc...) asparagine glycan. N312 and N346 each carry an N-linked (GlcNAc...) asparagine glycan. Residues N508 and N513 are each glycosylated (N-linked (GlcNAc...) asparagine). N-linked (GlcNAc...) asparagine glycans are attached at residues N556 and N585. Residues 635–655 (VVIAIVFATAVLMVIVTLHMM) traverse the membrane as a helical segment. The region spanning 685 to 972 (LKEENIIGKG…PPHSTSHNLI (288 aa)) is the Protein kinase domain. ATP-binding positions include 691–699 (IGKGGAGIV) and K713. The active-site Proton acceptor is D810.

Belongs to the protein kinase superfamily. Ser/Thr protein kinase family. Expressed in roots and shoots. Expressed in the vasculature of leaves, petioles, stems and roots.

It is found in the cell membrane. The enzyme catalyses L-seryl-[protein] + ATP = O-phospho-L-seryl-[protein] + ADP + H(+). It catalyses the reaction L-threonyl-[protein] + ATP = O-phospho-L-threonyl-[protein] + ADP + H(+). In terms of biological role, LRR receptor kinase involved in the regulation of root growth and root nodule organogenesis. Involved in long distance nodulation signaling events. Involved in the autoregulation of nodulation (AON), a long distance systemic signaling from root to shoot and back again, which allows legumes to limit the number of root nodules formed based on available nitrogen and previous rhizobial colonization. Acts from shoot to root to control AON. Interacts with CLE12 and CLE13 signaling to control nodule numbers. Required for the modulation of shoot-to-root auxin transport in response to altered nitrogen tissue concentrations and in the absence of rhizobia. Shoot-to-root auxin transport influences lateral root density and length. Involved in the regulation of root colonization by arbuscular mycorrhizal (AM) fungi. Interacts with CLE33 and CL53 signaling to repress strigolactone biosynthetic genes and strigolactone content in the roots, and consequently reduces the promotion of further colonization by AM fungi. The sequence is that of Leucine-rich repeat receptor-like kinase protein SUNN from Medicago truncatula (Barrel medic).